Reading from the N-terminus, the 452-residue chain is MADPASNVLRLHDTHLRDKRPFTPLDPENVRVYFCGPTVYDRAHLGNLRAMMCADILIRLLRTMYPRVTYVRNVTDVDDKINARAKENGEDISALTERTTQAFHEDLASLFILPPDIEPRATHHIDDMLEMIGRLVENGHAYVAEGHVLFAVRNFPSYGELSGRSLDDMIAGARVEVAPYKRDPGDFVLWKPSEPDLPGWDSPYGRGRPGWHIECSAMSHRYLGESFDIHGGGDDLLFPHHENERAQSMCCYPHGKFATHWVHNGMLLSNGEKMSKSLGNFFTIREVLDRSPAEPLRLLYLGAHYRSTLDFSWEKLEEARRVLDRLYRALERGNAQPGTALPAAVMDALCDDLNTPLAIAALHPLADAAMQGDQDAASSLLAAGKLLGLFNVTPAEWFQSGVDASAIEKLIEERLAARKSRDFARADAIRAQLAADGITLEDGPGGTTWRKA.

Cys35 serves as a coordination point for Zn(2+). The 'HIGH' region signature appears at 37 to 47; it reads PTVYDRAHLGN. Zn(2+)-binding residues include Cys215, His240, and Glu244. The 'KMSKS' region motif lies at 273 to 277; the sequence is KMSKS. Lys276 contacts ATP.

The protein belongs to the class-I aminoacyl-tRNA synthetase family. Monomer. Zn(2+) is required as a cofactor.

Its subcellular location is the cytoplasm. The catalysed reaction is tRNA(Cys) + L-cysteine + ATP = L-cysteinyl-tRNA(Cys) + AMP + diphosphate. The polypeptide is Cysteine--tRNA ligase (Gluconobacter oxydans (strain 621H) (Gluconobacter suboxydans)).